A 268-amino-acid chain; its full sequence is Orotidine 5'-phosphate decarboxylase (268 aa).

Substrate-binding positions include aspartate 38, 60-62, 92-101, tyrosine 218, and arginine 236; these read KTH and DRKFADIGNT. Lysine 94 functions as the Proton donor in the catalytic mechanism.

The protein belongs to the OMP decarboxylase family.

It carries out the reaction orotidine 5'-phosphate + H(+) = UMP + CO2. Its pathway is pyrimidine metabolism; UMP biosynthesis via de novo pathway; UMP from orotate: step 2/2. This chain is Orotidine 5'-phosphate decarboxylase (URA3), found in Candida tropicalis (Yeast).